We begin with the raw amino-acid sequence, 197 residues long: Fe/S biogenesis protein NfuA (197 aa).

C155 and C158 together coordinate [4Fe-4S] cluster.

It belongs to the NfuA family. As to quaternary structure, homodimer. It depends on [4Fe-4S] cluster as a cofactor.

Its function is as follows. Involved in iron-sulfur cluster biogenesis. Binds a 4Fe-4S cluster, can transfer this cluster to apoproteins, and thereby intervenes in the maturation of Fe/S proteins. Could also act as a scaffold/chaperone for damaged Fe/S proteins. This is Fe/S biogenesis protein NfuA from Pseudomonas syringae pv. syringae (strain B728a).